Reading from the N-terminus, the 383-residue chain is Anhydro-N-acetylmuramic acid kinase (383 aa).

An ATP-binding site is contributed by 9 to 16 (GTSLDGID).

This sequence belongs to the anhydro-N-acetylmuramic acid kinase family.

The catalysed reaction is 1,6-anhydro-N-acetyl-beta-muramate + ATP + H2O = N-acetyl-D-muramate 6-phosphate + ADP + H(+). It functions in the pathway amino-sugar metabolism; 1,6-anhydro-N-acetylmuramate degradation. Its pathway is cell wall biogenesis; peptidoglycan recycling. Its function is as follows. Catalyzes the specific phosphorylation of 1,6-anhydro-N-acetylmuramic acid (anhMurNAc) with the simultaneous cleavage of the 1,6-anhydro ring, generating MurNAc-6-P. Is required for the utilization of anhMurNAc either imported from the medium or derived from its own cell wall murein, and thus plays a role in cell wall recycling. The chain is Anhydro-N-acetylmuramic acid kinase from Bacillus cereus (strain ATCC 10987 / NRS 248).